The primary structure comprises 492 residues: MANYFNTLNLRQKLDQLGRCRFMDREEFADEANFLKGKKIVIVGCGAQGLNQGLNMRDSGLDISYALRPEAIAEKRASFQRATENGFKVGTYEELIPTADLVVNLTPDKQHSKVVADVMPLMKKDSAFGYSHGFNIVEVGEEIRKDITVVMVAPKCPGTEVREEYKRGFGVPTLIAVHPENDPKGEGMAIAKAWAAATGGHKAGVLESSFVAEVKSDLMGEQTILCGMLQAGSIVCYDKLVADGKDPAYAGKLIQYGWETITEALKQGGITLMMDRLSNSAKLRAFELAEQIKESLGFLYYKHMDDIISGHFSATMMADWANGDKDLFAWREATGKTAFENAPKYDGKISEQEYFDNGVLMIAMVKAGVELAFDAMVASGIYEESAYYESLHELPLIANTIARKRLYEMNVVISDTAEYGNYLFSNVATPILAKEIIPNLQKGDLGEPTPAVEVDNITLRDVNDAIRNHPVELIGQELRGYMTDMKRIAVAG.

One can recognise a KARI N-terminal Rossmann domain in the interval 14–208 (LDQLGRCRFM…GGHKAGVLES (195 aa)). NADP(+) contacts are provided by residues 45–48 (CGAQ), Arg68, Arg76, Ser78, and 108–110 (DKQ). His132 is an active-site residue. Position 158 (Gly158) interacts with NADP(+). KARI C-terminal knotted domains are found at residues 209–344 (SFVA…NAPK) and 345–485 (YDGK…MTDM). Residues Asp217, Glu221, Glu389, and Glu393 each coordinate Mg(2+). Substrate is bound at residue Ser414.

The protein belongs to the ketol-acid reductoisomerase family. Requires Mg(2+) as cofactor.

The enzyme catalyses (2R)-2,3-dihydroxy-3-methylbutanoate + NADP(+) = (2S)-2-acetolactate + NADPH + H(+). It catalyses the reaction (2R,3R)-2,3-dihydroxy-3-methylpentanoate + NADP(+) = (S)-2-ethyl-2-hydroxy-3-oxobutanoate + NADPH + H(+). The protein operates within amino-acid biosynthesis; L-isoleucine biosynthesis; L-isoleucine from 2-oxobutanoate: step 2/4. It participates in amino-acid biosynthesis; L-valine biosynthesis; L-valine from pyruvate: step 2/4. In terms of biological role, involved in the biosynthesis of branched-chain amino acids (BCAA). Catalyzes an alkyl-migration followed by a ketol-acid reduction of (S)-2-acetolactate (S2AL) to yield (R)-2,3-dihydroxy-isovalerate. In the isomerase reaction, S2AL is rearranged via a Mg-dependent methyl migration to produce 3-hydroxy-3-methyl-2-ketobutyrate (HMKB). In the reductase reaction, this 2-ketoacid undergoes a metal-dependent reduction by NADPH to yield (R)-2,3-dihydroxy-isovalerate. This chain is Ketol-acid reductoisomerase (NADP(+)), found in Haemophilus influenzae (strain PittEE).